A 249-amino-acid chain; its full sequence is Small ribosomal subunit protein eS6 (249 aa).

Disordered stretches follow at residues Pro161–Thr181 and Leu194–Lys249. Residues Arg216–Ala229 are compositionally biased toward basic and acidic residues. Residues Ser235, Ser236, Ser240, Ser244, and Ser247 each carry the phosphoserine modification. A compositionally biased stretch (low complexity) spans Ser236 to Lys249.

Belongs to the eukaryotic ribosomal protein eS6 family. Component of the small ribosomal subunit. Part of the small subunit (SSU) processome, composed of more than 70 proteins and the RNA chaperone small nucleolar RNA (snoRNA) U3. Post-translationally, ribosomal protein S6 is the major substrate of protein kinases in eukaryote ribosomes. The phosphorylation is stimulated by growth factors, tumor promoting agents, and mitogens. It is dephosphorylated at growth arrest.

The protein localises to the cytoplasm. It is found in the nucleus. Its subcellular location is the nucleolus. Functionally, component of the 40S small ribosomal subunit. Plays an important role in controlling cell growth and proliferation through the selective translation of particular classes of mRNA. Part of the small subunit (SSU) processome, first precursor of the small eukaryotic ribosomal subunit. During the assembly of the SSU processome in the nucleolus, many ribosome biogenesis factors, an RNA chaperone and ribosomal proteins associate with the nascent pre-rRNA and work in concert to generate RNA folding, modifications, rearrangements and cleavage as well as targeted degradation of pre-ribosomal RNA by the RNA exosome. This is Small ribosomal subunit protein eS6 (rps6) from Xenopus laevis (African clawed frog).